The following is a 436-amino-acid chain: MSRVRFDLDTLKRLAQFAAQRSSEDRIPQVAGSLTFTTMLSLVPLATVAFALFTAFPIFASFQMSLQIFLADHLMPAQLNSQIFNYLNQFASKAKGLTTIGMIFLFVTAVMTMMTVESAFNVIWRVRKARPIAQRILVYWAIITLGPILIGVSLSISSYLFTQSMTFTAAQRMTPVIEWALAGAALPLTAAAFTILYVYLPNCRVEWRDAVIGGVTAAIAFELAKRGFGYYVRRIPTYTAVYGAFAAVPLFLLWMYLCWFITLAGAMIASALPAIRIGQFHRPTFEGSNLFDSLELLARLSEARDAGKRGYTVPELSRMLRRDMGTTINLLEKLEEIEWIARLQEDGARPHFLLLANPAQITVERLFGLFVIDRAELGYQLELASTRVDGEMLLAALENDKLKVTLAALLTARAAARAAQAAENESGTSSMPHQAA.

Transmembrane regions (helical) follow at residues 42–62 (LVPL…FASF), 96–116 (GLTT…MMTV), 136–156 (ILVY…SLSI), 180–200 (ALAG…YVYL), 210–230 (AVIG…GFGY), and 241–261 (VYGA…CWFI).

The protein belongs to the UPF0761 family.

It localises to the cell inner membrane. The sequence is that of UPF0761 membrane protein Bxeno_A3061 from Paraburkholderia xenovorans (strain LB400).